A 736-amino-acid chain; its full sequence is Elongation factor 2 (736 aa).

A tr-type G domain is found at 18–234 (TRVRNIGIIA…VIDAYTASDK (217 aa)). Residues 27-34 (AHVDHGKT), 93-97 (DTPGH), and 147-150 (NKVD) each bind GTP. His-603 carries the post-translational modification Diphthamide.

This sequence belongs to the TRAFAC class translation factor GTPase superfamily. Classic translation factor GTPase family. EF-G/EF-2 subfamily.

It localises to the cytoplasm. Functionally, catalyzes the GTP-dependent ribosomal translocation step during translation elongation. During this step, the ribosome changes from the pre-translocational (PRE) to the post-translocational (POST) state as the newly formed A-site-bound peptidyl-tRNA and P-site-bound deacylated tRNA move to the P and E sites, respectively. Catalyzes the coordinated movement of the two tRNA molecules, the mRNA and conformational changes in the ribosome. The chain is Elongation factor 2 from Saccharolobus islandicus (strain Y.N.15.51 / Yellowstone #2) (Sulfolobus islandicus).